The primary structure comprises 539 residues: CTP synthase (539 aa).

The interval 1-268 (MADTKYIFVT…DETVLRKVGL (268 aa)) is amidoligase domain. Ser15 contributes to the CTP binding site. Ser15 contacts UTP. 16 to 21 (SLGKGI) is an ATP binding site. Residue Tyr56 coordinates L-glutamine. Asp73 is a binding site for ATP. Positions 73 and 143 each coordinate Mg(2+). CTP-binding positions include 150–152 (DIE), 189–194 (KTKPTQ), and Lys225. UTP is bound by residues 189-194 (KTKPTQ) and Lys225. The 243-residue stretch at 294–536 (TIALVGKYVE…IREAIKTRKK (243 aa)) folds into the Glutamine amidotransferase type-1 domain. Gly356 serves as a coordination point for L-glutamine. Residue Cys383 is the Nucleophile; for glutamine hydrolysis of the active site. L-glutamine contacts are provided by residues 384-387 (LGMQ), Glu407, and Arg464. Active-site residues include His509 and Glu511.

This sequence belongs to the CTP synthase family. In terms of assembly, homotetramer.

The catalysed reaction is UTP + L-glutamine + ATP + H2O = CTP + L-glutamate + ADP + phosphate + 2 H(+). It carries out the reaction L-glutamine + H2O = L-glutamate + NH4(+). It catalyses the reaction UTP + NH4(+) + ATP = CTP + ADP + phosphate + 2 H(+). It participates in pyrimidine metabolism; CTP biosynthesis via de novo pathway; CTP from UDP: step 2/2. With respect to regulation, allosterically activated by GTP, when glutamine is the substrate; GTP has no effect on the reaction when ammonia is the substrate. The allosteric effector GTP functions by stabilizing the protein conformation that binds the tetrahedral intermediate(s) formed during glutamine hydrolysis. Inhibited by the product CTP, via allosteric rather than competitive inhibition. Catalyzes the ATP-dependent amination of UTP to CTP with either L-glutamine or ammonia as the source of nitrogen. Regulates intracellular CTP levels through interactions with the four ribonucleotide triphosphates. The polypeptide is CTP synthase (Porphyromonas gingivalis (strain ATCC 33277 / DSM 20709 / CIP 103683 / JCM 12257 / NCTC 11834 / 2561)).